A 3075-amino-acid polypeptide reads, in one-letter code: Probable polyketide synthase 30 (3075 aa).

The region spanning 26 to 458 is the Ketosynthase family 3 (KS3) domain; sequence SGDVAVIGIG…GSNVCLILSE (433 aa). Active-site for beta-ketoacyl synthase activity residues include cysteine 198, histidine 337, and histidine 381. Positions 663 to 696 are acyl/malonyl transferase; the sequence is GVSADIIIGHSLGEVSSPYCSGMIDFQTLCYLTY. Residue serine 673 is the For acyl/malonyl transferase activity of the active site. Residues 963–1085 form an N-terminal hotdog fold region; it reads GPSINNLGNN…GNFSLTKHNS (123 aa). The PKS/mFAS DH domain maps to 963–1269; it reads GPSINNLGNN…CALVSLGSNP (307 aa). Residue histidine 997 is the Proton acceptor; for dehydratase activity of the active site. Residues 1102-1269 form a C-terminal hotdog fold region; the sequence is NFTSMSKQDF…CALVSLGSNP (168 aa). Aspartate 1174 (proton donor; for dehydratase activity) is an active-site residue. The 78-residue stretch at 2533–2610 folds into the Carrier domain; it reads DNNEIIRSTI…QSIEIIKSAH (78 aa). At serine 2570 the chain carries O-(pantetheine 4'-phosphoryl)serine.

Requires pantetheine 4'-phosphate as cofactor.

Functionally, probable polyketide synthase. May be involved in the process of cell migration. The polypeptide is Probable polyketide synthase 30 (pks30) (Dictyostelium discoideum (Social amoeba)).